The sequence spans 344 residues: Arginine N-succinyltransferase (344 aa).

Leucine 125 provides a ligand contact to succinyl-CoA. Histidine 229 (proton donor) is an active-site residue.

The protein belongs to the arginine N-succinyltransferase family.

The enzyme catalyses succinyl-CoA + L-arginine = N(2)-succinyl-L-arginine + CoA + H(+). It functions in the pathway amino-acid degradation; L-arginine degradation via AST pathway; L-glutamate and succinate from L-arginine: step 1/5. Functionally, catalyzes the transfer of succinyl-CoA to arginine to produce N(2)-succinylarginine. This Salmonella typhi protein is Arginine N-succinyltransferase.